We begin with the raw amino-acid sequence, 110 residues long: UPF0060 membrane protein Bcen_0802 (110 aa).

4 helical membrane-spanning segments follow: residues 9-29 (ALFAATALAEIVGCYLPWLVL), 34-54 (PAWLLVPAALSLALFAWLLTL), 66-86 (YGGVYIAVALIWLRVVDGVAL), and 88-108 (RWDVAGAVLALGGMAVIALQP).

It belongs to the UPF0060 family.

It is found in the cell inner membrane. The sequence is that of UPF0060 membrane protein Bcen_0802 from Burkholderia orbicola (strain AU 1054).